Reading from the N-terminus, the 130-residue chain is Small ribosomal subunit protein uS8 (130 aa).

Belongs to the universal ribosomal protein uS8 family. Part of the 30S ribosomal subunit. Contacts proteins S5 and S12.

One of the primary rRNA binding proteins, it binds directly to 16S rRNA central domain where it helps coordinate assembly of the platform of the 30S subunit. The chain is Small ribosomal subunit protein uS8 from Vibrio vulnificus (strain CMCP6).